A 604-amino-acid polypeptide reads, in one-letter code: Terpenoid synthase 30 (604 aa).

Mg(2+) contacts are provided by Asn356, Asp360, Asn500, Thr504, and Glu508. The DDXXD motif; degenerate motif lies at 356 to 360 (NDVCD).

This sequence belongs to the terpene synthase family. Tpsa subfamily. Mg(2+) serves as cofactor. It depends on Mn(2+) as a cofactor.

It is found in the cytoplasm. It participates in secondary metabolite biosynthesis; terpenoid biosynthesis. Functionally, involved in terpene biosynthesis in roots. Possesses sesquiterpene (C15) synthase activity and diterpene (C20) synthase activity in vitro. The sequence is that of Terpenoid synthase 30 from Arabidopsis thaliana (Mouse-ear cress).